The following is a 1109-amino-acid chain: ABC transporter G family member 28 (1109 aa).

2 consecutive transmembrane segments (helical) span residues 5-25 (NSYF…LILQ) and 291-311 (NITA…IILY). The tract at residues 325–411 (QAKSREKAVQ…DTKKGKKKEK (87 aa)) is disordered. Over residues 339–357 (SQSREKWKSAKDIAKKHAT) the composition is skewed to basic and acidic residues. One can recognise an ABC transporter domain in the interval 499–741 (VAFKDLSITL…FSSLGIVVPE (243 aa)). 533-540 (GPSGAGKT) serves as a coordination point for ATP. Positions 859-1056 (QQYRYFLGRL…ALEAFVVSNA (198 aa)) constitute an ABC transmembrane type-2 domain. 6 consecutive transmembrane segments (helical) span residues 879-899 (LAVD…LAKV), 904-924 (FGAM…KITA), 954-974 (TVDH…FYFF), 986-1006 (VVLI…AILF), 1008-1028 (PGPA…IATS), and 1084-1104 (CLVF…FCMV).

It belongs to the ABC transporter superfamily. ABCG family. Eye pigment precursor importer (TC 3.A.1.204) subfamily.

The protein resides in the membrane. This is ABC transporter G family member 28 (ABCG28) from Arabidopsis thaliana (Mouse-ear cress).